The primary structure comprises 126 residues: UPF0235 protein C15orf40 homolog (126 aa).

The disordered stretch occupies residues 1–32 (MPKKAGATSKGKNQTKEPETAPPAAGPVATDP). S89 is modified (phosphoserine).

The protein belongs to the UPF0235 family.

In Mus musculus (Mouse), this protein is UPF0235 protein C15orf40 homolog.